Here is a 345-residue protein sequence, read N- to C-terminus: Anthranilate phosphoribosyltransferase (345 aa).

5-phospho-alpha-D-ribose 1-diphosphate-binding positions include Gly81, 84–85 (GD), Ser89, 91–94 (NVST), 109–117 (KHGNRAATS), and Ala121. Gly81 serves as a coordination point for anthranilate. Ser93 is a Mg(2+) binding site. Asn112 lines the anthranilate pocket. Residue Arg167 coordinates anthranilate. Positions 226 and 227 each coordinate Mg(2+).

It belongs to the anthranilate phosphoribosyltransferase family. As to quaternary structure, homodimer. Mg(2+) serves as cofactor.

The enzyme catalyses N-(5-phospho-beta-D-ribosyl)anthranilate + diphosphate = 5-phospho-alpha-D-ribose 1-diphosphate + anthranilate. Its pathway is amino-acid biosynthesis; L-tryptophan biosynthesis; L-tryptophan from chorismate: step 2/5. Its function is as follows. Catalyzes the transfer of the phosphoribosyl group of 5-phosphorylribose-1-pyrophosphate (PRPP) to anthranilate to yield N-(5'-phosphoribosyl)-anthranilate (PRA). This chain is Anthranilate phosphoribosyltransferase, found in Methylobacterium radiotolerans (strain ATCC 27329 / DSM 1819 / JCM 2831 / NBRC 15690 / NCIMB 10815 / 0-1).